Here is a 514-residue protein sequence, read N- to C-terminus: uncharacterized protein (514 aa).

Disordered stretches follow at residues 1–68, 109–244, and 272–484; these read MSSP…SESE, VPPP…RQAS, and RPAV…AQGC. Basic residues predominate over residues 368–384; it reads KPQKPKHSSPGKKPAGR. Residues 385 to 405 are compositionally biased toward basic and acidic residues; it reads KTRESQAAAREDNDPNRDEVP.

This is an uncharacterized protein from Homo sapiens (Human).